A 530-amino-acid chain; its full sequence is Chaperonin GroEL (530 aa).

Residues 30 to 33 (TLGP), Lys-51, 87 to 91 (DGTTT), Gly-415, and Asp-495 contribute to the ATP site.

It belongs to the chaperonin (HSP60) family. In terms of assembly, forms a cylinder of 14 subunits composed of two heptameric rings stacked back-to-back. Interacts with the co-chaperonin GroES.

It is found in the cytoplasm. It carries out the reaction ATP + H2O + a folded polypeptide = ADP + phosphate + an unfolded polypeptide.. Together with its co-chaperonin GroES, plays an essential role in assisting protein folding. The GroEL-GroES system forms a nano-cage that allows encapsulation of the non-native substrate proteins and provides a physical environment optimized to promote and accelerate protein folding. This Carsonella ruddii (strain PV) protein is Chaperonin GroEL.